The sequence spans 367 residues: UDP-N-acetylglucosamine--N-acetylmuramyl-(pentapeptide) pyrophosphoryl-undecaprenol N-acetylglucosamine transferase (367 aa).

UDP-N-acetyl-alpha-D-glucosamine-binding positions include 11–13, Asn125, Arg163, Ser197, and Gln289; that span reads TAG.

The protein belongs to the glycosyltransferase 28 family. MurG subfamily.

It localises to the cell membrane. It carries out the reaction di-trans,octa-cis-undecaprenyl diphospho-N-acetyl-alpha-D-muramoyl-L-alanyl-D-glutamyl-meso-2,6-diaminopimeloyl-D-alanyl-D-alanine + UDP-N-acetyl-alpha-D-glucosamine = di-trans,octa-cis-undecaprenyl diphospho-[N-acetyl-alpha-D-glucosaminyl-(1-&gt;4)]-N-acetyl-alpha-D-muramoyl-L-alanyl-D-glutamyl-meso-2,6-diaminopimeloyl-D-alanyl-D-alanine + UDP + H(+). The protein operates within cell wall biogenesis; peptidoglycan biosynthesis. Its function is as follows. Cell wall formation. Catalyzes the transfer of a GlcNAc subunit on undecaprenyl-pyrophosphoryl-MurNAc-pentapeptide (lipid intermediate I) to form undecaprenyl-pyrophosphoryl-MurNAc-(pentapeptide)GlcNAc (lipid intermediate II). The polypeptide is UDP-N-acetylglucosamine--N-acetylmuramyl-(pentapeptide) pyrophosphoryl-undecaprenol N-acetylglucosamine transferase (Clavibacter michiganensis subsp. michiganensis (strain NCPPB 382)).